A 368-amino-acid chain; its full sequence is 3-dehydroquinate synthase (368 aa).

Residues Asp69 to Lys74, Gly103 to Asp107, Thr127 to Thr128, Lys140, and Lys149 each bind NAD(+). Glu182, His245, and His262 together coordinate Zn(2+).

It belongs to the sugar phosphate cyclases superfamily. Dehydroquinate synthase family. The cofactor is NAD(+). Co(2+) serves as cofactor. Zn(2+) is required as a cofactor.

It is found in the cytoplasm. It carries out the reaction 7-phospho-2-dehydro-3-deoxy-D-arabino-heptonate = 3-dehydroquinate + phosphate. It functions in the pathway metabolic intermediate biosynthesis; chorismate biosynthesis; chorismate from D-erythrose 4-phosphate and phosphoenolpyruvate: step 2/7. Catalyzes the conversion of 3-deoxy-D-arabino-heptulosonate 7-phosphate (DAHP) to dehydroquinate (DHQ). The polypeptide is 3-dehydroquinate synthase (Pseudomonas aeruginosa (strain ATCC 15692 / DSM 22644 / CIP 104116 / JCM 14847 / LMG 12228 / 1C / PRS 101 / PAO1)).